A 340-amino-acid polypeptide reads, in one-letter code: Glucokinase (340 aa).

17-22 (GDIGGT) is an ATP binding site.

The protein belongs to the bacterial glucokinase family.

It is found in the cytoplasm. The enzyme catalyses D-glucose + ATP = D-glucose 6-phosphate + ADP + H(+). This chain is Glucokinase, found in Agrobacterium fabrum (strain C58 / ATCC 33970) (Agrobacterium tumefaciens (strain C58)).